A 128-amino-acid chain; its full sequence is Large ribosomal subunit protein bL12 (128 aa).

This sequence belongs to the bacterial ribosomal protein bL12 family. In terms of assembly, homodimer. Part of the ribosomal stalk of the 50S ribosomal subunit. Forms a multimeric L10(L12)X complex, where L10 forms an elongated spine to which 2 to 4 L12 dimers bind in a sequential fashion. Binds GTP-bound translation factors.

Functionally, forms part of the ribosomal stalk which helps the ribosome interact with GTP-bound translation factors. Is thus essential for accurate translation. This chain is Large ribosomal subunit protein bL12, found in Synechococcus sp. (strain ATCC 27144 / PCC 6301 / SAUG 1402/1) (Anacystis nidulans).